The primary structure comprises 247 residues: Eukaryotic translation initiation factor 6 (247 aa).

Phosphoserine; by CK1 is present on residues Ser-174 and Ser-175.

Belongs to the eIF-6 family. In terms of assembly, monomer. Associates with the 60S ribosomal subunit. Phosphorylation at Ser-174 and Ser-175 promotes nuclear export.

It localises to the cytoplasm. The protein localises to the nucleus. The protein resides in the nucleolus. Its function is as follows. Binds to the 60S ribosomal subunit and prevents its association with the 40S ribosomal subunit to form the 80S initiation complex in the cytoplasm. Is also involved in ribosome biogenesis. Associates with pre-60S subunits in the nucleus and is involved in its nuclear export. The protein is Eukaryotic translation initiation factor 6 (tif6) of Emericella nidulans (strain FGSC A4 / ATCC 38163 / CBS 112.46 / NRRL 194 / M139) (Aspergillus nidulans).